We begin with the raw amino-acid sequence, 352 residues long: 4-hydroxybenzaldehyde synthase, chloroplastic (352 aa).

A glycan (N-linked (GlcNAc...) asparagine) is linked at asparagine 122. Intrachain disulfides connect cysteine 159–cysteine 199 and cysteine 190–cysteine 231. An N-linked (GlcNAc...) asparagine glycan is attached at asparagine 247. Cysteine 289 and cysteine 339 are joined by a disulfide. Active-site residues include histidine 298 and asparagine 318.

This sequence belongs to the peptidase C1 family. In terms of assembly, forms homodimers, homotrimers and homotetramers. Mainly expressed in pods, but also present in stems, roots, leaves and embryos (at protein level).

Its subcellular location is the plastid. It is found in the chloroplast. It catalyses the reaction (E)-4-coumarate + H2O = 4-hydroxybenzaldehyde + acetate. Its pathway is aromatic compound metabolism; phenylpropanoid biosynthesis. Inhibited by ascorbate. Involved in the biosynthesis of vanillin (4-hydroxy-3-methoxy-benzaldehyde) and derivative natural products, key components of vanilla pods flavor. Catalyzes the conversion of (E)-4-coumarate to 4-hydroxybenzaldehyde, a vanillin precursor. Mediates the conversion of ferulic acid to 3-methoxy-4-hydroxybenzaldehyde with a very low efficiency. Cannot use cinnamic, caffeic, sinapic and o-coumaric acids as substrates. This Vanilla planifolia (Vanilla) protein is 4-hydroxybenzaldehyde synthase, chloroplastic.